Consider the following 340-residue polypeptide: Phosphoribosylformylglycinamidine cyclo-ligase (340 aa).

Belongs to the AIR synthase family.

It localises to the cytoplasm. The catalysed reaction is 2-formamido-N(1)-(5-O-phospho-beta-D-ribosyl)acetamidine + ATP = 5-amino-1-(5-phospho-beta-D-ribosyl)imidazole + ADP + phosphate + H(+). The protein operates within purine metabolism; IMP biosynthesis via de novo pathway; 5-amino-1-(5-phospho-D-ribosyl)imidazole from N(2)-formyl-N(1)-(5-phospho-D-ribosyl)glycinamide: step 2/2. The protein is Phosphoribosylformylglycinamidine cyclo-ligase of Streptococcus pyogenes serotype M3 (strain ATCC BAA-595 / MGAS315).